The following is a 105-amino-acid chain: Integration host factor (105 aa).

The short motif at 64–71 (LPKVGKVK) is the H2TH motif, binds DNA element. A lid, binds DNA region spans residues 82 to 94 (APTRRLRGLGDRQ).

The protein belongs to the actinobacterial IHF (aIHF) family. Binds DNA as a monomer. In terms of assembly, (Microbial infection) Forms a complex with L5 Int and attP DNA. The complex binds attB to form products.

The protein localises to the cytoplasm. It localises to the nucleoid. Its function is as follows. A nucleoid-associated protein (NAP) that binds DNA without any sequence specificity. Compacts DNA. Binds along the whole chromosome in a dynamic manner, has equal affinity for the oriC site, attB and a randon 62% GC-rich sequence. Plays a role in transcription regulation. In terms of biological role, (Microbial infection) Stimulates temperate Mycobacterium phage L5 Int-mediated recombination in vitro using supercoiled attP (phage attachment site) DNA, linear attB DNA (bacterial attachment site) and L5 integrase (L5 Int or Int-L5, AC P22884). mIHF acts on L5 Int to stimulate formation of a specific intasome complex. mIHF probably stabilizes a sharp bend in the DNA during phage integration. This is Integration host factor from Mycolicibacterium smegmatis (strain ATCC 700084 / mc(2)155) (Mycobacterium smegmatis).